Here is a 121-residue protein sequence, read N- to C-terminus: Large ribosomal subunit protein bL20 (121 aa).

The protein belongs to the bacterial ribosomal protein bL20 family.

Functionally, binds directly to 23S ribosomal RNA and is necessary for the in vitro assembly process of the 50S ribosomal subunit. It is not involved in the protein synthesizing functions of that subunit. The sequence is that of Large ribosomal subunit protein bL20 from Mycoplasma mycoides subsp. mycoides SC (strain CCUG 32753 / NCTC 10114 / PG1).